The sequence spans 180 residues: Anaerobic nitrite reductase GLB0 (180 aa).

One can recognise a Globin domain in the interval 23–172 (TYSKENEQLV…LAEQVKAEMH (150 aa)). The Homodimerization signature appears at 56-60 (EIAPG). Heme b is bound by residues Ser66, Lys80, His84, Lys114, Thr118, and His119. Residues 126–138 (DDQFEIVKEAILY) carry the Homodimerization motif.

Belongs to the plant globin family. In terms of assembly, homodimer. Heme b serves as cofactor.

Its subcellular location is the cytoplasm. The protein resides in the nucleus. It catalyses the reaction Fe(III)-heme b-[protein] + nitric oxide + H2O = Fe(II)-heme b-[protein] + nitrite + 2 H(+). Its function is as follows. Phytoglobin that reduces nitrite to nitric oxide (NO) under anoxic conditions (e.g. during flooding or in waterlogged soil). May not function as an oxygen storage or transport protein. Has an unusually high affinity for O(2) through an hexacoordinate heme iron because of a very low dissociation constant. The protein is Anaerobic nitrite reductase GLB0 of Physcomitrium patens (Spreading-leaved earth moss).